Reading from the N-terminus, the 300-residue chain is tRNA dimethylallyltransferase (300 aa).

ATP is bound at residue 18 to 25 (GPTATGKS). 20 to 25 (TATGKS) is a substrate binding site. An interaction with substrate tRNA region spans residues 43 to 46 (DSRQ).

The protein belongs to the IPP transferase family. Monomer. It depends on Mg(2+) as a cofactor.

The catalysed reaction is adenosine(37) in tRNA + dimethylallyl diphosphate = N(6)-dimethylallyladenosine(37) in tRNA + diphosphate. Its function is as follows. Catalyzes the transfer of a dimethylallyl group onto the adenine at position 37 in tRNAs that read codons beginning with uridine, leading to the formation of N6-(dimethylallyl)adenosine (i(6)A). This chain is tRNA dimethylallyltransferase, found in Cyanothece sp. (strain PCC 7425 / ATCC 29141).